The sequence spans 575 residues: MADRGGVGEAAAVGASPASVPGLNPTLGWRERLRAGLAGTGASLWFVAGLGLLYALRIPLRLCENLAAVTVFLNSLTPKFYVALTGTSSLISGLIFIFEWWYFHKHGTSFIEQVSVSHLQPLMGGTESSISEPGSPSRNRENETSRQNLSECKVWRNPLNLFRGAEYRRYTWVTGKEPLTYYDMNLSAQDHQTFFTCDTDFLRPSDTVMQKAWRERNPPARIKAAYQALELNNDCATAYVLLAEEEATTIVDAERLFKQALKAGETIYRQSQQCQHQSPQHEAQLRRDTNVLVYIKRRLAMCARKLGRIREAVKIMRDLMKEFPPLTMLNIHENLLESLLELQAYPDVQAVLAKYDDISLPKSAAICYTAALLKTRTVSEKFSPETASRRGLSTAEINAVEAIHRAVEFNPHVPKYLLEMKSLILPPEHILKRGDSEAIAYAFFHLQHWKRIEGALNLLQCTWEGTFRMIPYPLEKGHLFYPYPSCTETADRELLPTFHHVSVYPKKELPLFIHFTAGFCSSTAMIAILTHQFPEIMGIFAKAVLGLWCPQPWASSGFEENTQDLKSEDLGLSSG.

Helical transmembrane passes span 36-56 (GLAG…LYAL) and 80-100 (FYVA…IFEW). The disordered stretch occupies residues 125 to 147 (GTESSISEPGSPSRNRENETSRQ). Positions 126 to 137 (TESSISEPGSPS) are enriched in polar residues.

Belongs to the ST7 family.

The protein localises to the membrane. The polypeptide is Suppressor of tumorigenicity 7 protein-like (ST7L) (Homo sapiens (Human)).